The following is a 273-amino-acid chain: Urease accessory protein UreD (273 aa).

Belongs to the UreD family. UreD, UreF and UreG form a complex that acts as a GTP-hydrolysis-dependent molecular chaperone, activating the urease apoprotein by helping to assemble the nickel containing metallocenter of UreC. The UreE protein probably delivers the nickel.

It localises to the cytoplasm. In terms of biological role, required for maturation of urease via the functional incorporation of the urease nickel metallocenter. This Rhizobium leguminosarum bv. trifolii (strain WSM2304) protein is Urease accessory protein UreD.